Consider the following 185-residue polypeptide: Ribosome-recycling factor (185 aa).

It belongs to the RRF family.

Its subcellular location is the cytoplasm. Functionally, responsible for the release of ribosomes from messenger RNA at the termination of protein biosynthesis. May increase the efficiency of translation by recycling ribosomes from one round of translation to another. The sequence is that of Ribosome-recycling factor from Shewanella woodyi (strain ATCC 51908 / MS32).